The following is a 124-amino-acid chain: uncharacterized protein (124 aa).

Positions M1–Y65 are disordered. Residues L37–V47 are compositionally biased toward polar residues.

This is an uncharacterized protein from Microplitis demolitor (Parasitoid wasp).